We begin with the raw amino-acid sequence, 421 residues long: Putative bifunctional polynucleotide phosphatase/kinase (421 aa).

Positions 25 to 231 (DSYLKGIINN…SENLKTNYKL (207 aa)) are phosphatase. The interval 235–415 (NPTEIIDEIE…DDPKWKRSFM (181 aa)) is kinase. 265–272 (GQPGSGKS) lines the ATP pocket.

It in the N-terminal section; belongs to the DNA 3' phosphatase family.

The enzyme catalyses a 3'end (2'-deoxyribonucleotide 3'-phosphate)-DNA + H2O = a 3'-end 2'-deoxyribonucleotide-DNA + phosphate. It catalyses the reaction a 5'-end dephospho-2'-deoxyribonucleoside-DNA + ATP = a 5'-end 5'-phospho-2'-deoxyribonucleoside-DNA + ADP + H(+). The sequence is that of Putative bifunctional polynucleotide phosphatase/kinase from Acanthamoeba polyphaga mimivirus (APMV).